Consider the following 124-residue polypeptide: MSQQPYYETMYILRPDIPEEEVETHVTKYREMVTEAGAEVLDNQMRGKRRLAYPISNHKEGIYVQLSHNGNGQQVAVLEKAMRLSEDVIRYLTVKQEGPLPAPRIVPGSEPEPVEQQEAAAVEA.

Positions 99-124 (PLPAPRIVPGSEPEPVEQQEAAAVEA) are disordered. The span at 114-124 (VEQQEAAAVEA) shows a compositional bias: low complexity.

It belongs to the bacterial ribosomal protein bS6 family.

In terms of biological role, binds together with bS18 to 16S ribosomal RNA. In Prochlorococcus marinus (strain MIT 9303), this protein is Small ribosomal subunit protein bS6.